A 239-amino-acid chain; its full sequence is MKNKRSQNSPYITPNSSYTTLEKALGYSFKDKRLLEQALTHKSCKLALNNERLEFLGDAVLGLVIGELLYHKFYQYDEGKLSKLRASIVSAHGFTKLAKAIALQDYLRVSSSEEISNGREKPSILSSAFEALMAGVYLEAGLAKVQKIMQNLLNRAYKRLDLEHLFMDYKTALQELTQAQFCVIPTYQLLKEKGPDHHKEFEMALYIQDKMYATAKGKSKKEAEQQCAYQALQKLKEAK.

In terms of domain architecture, RNase III spans 18-141 (YTTLEKALGY…LMAGVYLEAG (124 aa)). Position 54 (Glu-54) interacts with Mg(2+). Asp-58 is a catalytic residue. Ser-127 and Glu-130 together coordinate Mg(2+). Glu-130 is a catalytic residue. In terms of domain architecture, DRBM spans 168-237 (DYKTALQELT…AYQALQKLKE (70 aa)).

Belongs to the ribonuclease III family. Homodimer. Mg(2+) serves as cofactor.

The protein resides in the cytoplasm. It catalyses the reaction Endonucleolytic cleavage to 5'-phosphomonoester.. Its function is as follows. Digests double-stranded RNA. Involved in the processing of primary rRNA transcript to yield the immediate precursors to the large and small rRNAs (23S and 16S). Processes some mRNAs, and tRNAs when they are encoded in the rRNA operon. Processes pre-crRNA and tracrRNA of type II CRISPR loci if present in the organism. The chain is Ribonuclease 3 from Helicobacter pylori (strain ATCC 700392 / 26695) (Campylobacter pylori).